Consider the following 152-residue polypeptide: MTASNTKNASAIPIDKFSNVRITSIWTFLQSVDWSEPWLMALLAFHVFCFAFTLLSCKYYRIQICHFLLMVAMVYSAEYLNELAAMNWRSFSKFQYFDSKGMFISLVYSVPLLLNTVIIVAVWVWRTFSTMTELKILQLKRKAARENHKKTQ.

At Met-1–Glu-36 the chain is on the perinuclear space side. The helical transmembrane segment at Pro-37–Cys-57 threads the bilayer. The Nuclear portion of the chain corresponds to Lys-58–Gln-63. The helical transmembrane segment at Ile-64–Ala-84 threads the bilayer. Residues Ala-85–Met-102 lie on the Perinuclear space side of the membrane. A helical transmembrane segment spans residues Phe-103 to Trp-123. At Val-124–Gln-152 the chain is on the nuclear side. The segment at Val-124 to Gln-152 is DNA-binding. Residues Ser-129–Gln-152 are a coiled coil.

Belongs to the TMEM18 family.

Its subcellular location is the nucleus membrane. In Danio rerio (Zebrafish), this protein is Transmembrane protein 18 (tmem18).